The chain runs to 436 residues: Tryptophan synthase beta chain (436 aa).

Position 129 is an N6-(pyridoxal phosphate)lysine (Lys-129).

It belongs to the TrpB family. Tetramer of two alpha and two beta chains. It depends on pyridoxal 5'-phosphate as a cofactor.

It carries out the reaction (1S,2R)-1-C-(indol-3-yl)glycerol 3-phosphate + L-serine = D-glyceraldehyde 3-phosphate + L-tryptophan + H2O. The protein operates within amino-acid biosynthesis; L-tryptophan biosynthesis; L-tryptophan from chorismate: step 5/5. Functionally, the beta subunit is responsible for the synthesis of L-tryptophan from indole and L-serine. This chain is Tryptophan synthase beta chain, found in Prochlorococcus marinus (strain MIT 9313).